The sequence spans 34 residues: MSDIN-like toxin proprotein 12 (34 aa).

The propeptide occupies 1 to 10; the sequence is MSDINATRLP. Residues 11–19 constitute a cross-link (cyclopeptide (His-Pro)); it reads HPFPLGLQP. Residues 20–34 constitute a propeptide that is removed on maturation; the sequence is CAGDVDNLTLTKGEG.

Belongs to the MSDIN fungal toxin family. Processed by the macrocyclase-peptidase enzyme POPB to yield a toxic cyclic nonapeptide. POPB first removes 10 residues from the N-terminus. Conformational trapping of the remaining peptide forces the enzyme to release this intermediate rather than proceed to macrocyclization. The enzyme rebinds the remaining peptide in a different conformation and catalyzes macrocyclization of the N-terminal 9 residues.

Probable toxin that belongs to the MSDIN-like toxin family responsible for a large number of food poisoning cases and deaths. The polypeptide is MSDIN-like toxin proprotein 12 (Amanita bisporigera (Destroying angel)).